The sequence spans 130 residues: Large-conductance mechanosensitive channel (130 aa).

Over 1-14 the chain is Cytoplasmic; sequence MWNEFKAFAMRGNI. The chain crosses the membrane as a helical span at residues 15–43; it reads VDLAIGVVIGGAFGKIVTSLVNDIIMPLV. Over 44–65 the chain is Extracellular; the sequence is GLLLGGLDFSGLSFTFGDAVVK. Residues 66-85 traverse the membrane as a helical segment; it reads YGSFIQTIVNFLIISFSIFI. At 86–130 the chain is on the cytoplasmic side; it reads VIRTLNGLRRKKEAEEEAAEEAVDAQEELLKEIRDLLKQQAKSPE.

The protein belongs to the MscL family. In terms of assembly, homopentamer.

It is found in the cell membrane. Its function is as follows. Channel that opens in response to stretch forces in the membrane lipid bilayer. Forms a nonselective ion channel with a conductance of about 4 nanosiemens. May participate in the regulation of osmotic pressure changes within the cell. This Bacillus subtilis (strain 168) protein is Large-conductance mechanosensitive channel.